A 426-amino-acid chain; its full sequence is Serine hydroxymethyltransferase (426 aa).

Residues Leu118 and 122-124 (GHL) each bind (6S)-5,6,7,8-tetrahydrofolate. Lys227 is subject to N6-(pyridoxal phosphate)lysine. Positions 342 to 368 (NTIPNDPKPPTQASGIRLGTPAMTTRG) are disordered.

The protein belongs to the SHMT family. Homodimer. Requires pyridoxal 5'-phosphate as cofactor.

It is found in the cytoplasm. It catalyses the reaction (6R)-5,10-methylene-5,6,7,8-tetrahydrofolate + glycine + H2O = (6S)-5,6,7,8-tetrahydrofolate + L-serine. The protein operates within one-carbon metabolism; tetrahydrofolate interconversion. It functions in the pathway amino-acid biosynthesis; glycine biosynthesis; glycine from L-serine: step 1/1. Its function is as follows. Catalyzes the reversible interconversion of serine and glycine with tetrahydrofolate (THF) serving as the one-carbon carrier. This reaction serves as the major source of one-carbon groups required for the biosynthesis of purines, thymidylate, methionine, and other important biomolecules. Also exhibits THF-independent aldolase activity toward beta-hydroxyamino acids, producing glycine and aldehydes, via a retro-aldol mechanism. The sequence is that of Serine hydroxymethyltransferase from Thermomicrobium roseum (strain ATCC 27502 / DSM 5159 / P-2).